A 93-amino-acid polypeptide reads, in one-letter code: Insertion element ISR1 uncharacterized 11 kDa protein A1 (93 aa).

2 disordered regions span residues 14–33 (RRAR…QERR) and 68–93 (RRRA…SAGR).

The chain is Insertion element ISR1 uncharacterized 11 kDa protein A1 from Rhizobium sp.